Here is a 272-residue protein sequence, read N- to C-terminus: Merozoite surface protein 2 (272 aa).

A signal peptide spans 1 to 20 (MKVIKTLSIINFFIFVTFNI). Residues N22 and N36 are each glycosylated (N-linked (GlcNAc...) asparagine). The segment at 44 to 198 (AESKPSTGAG…EQTESPELQS (155 aa)) is polymorphic region. The tract at residues 45–233 (ESKPSTGAGG…DSQKECTDGN (189 aa)) is disordered. The span at 51 to 82 (GAGGSAGGSAGGSAGGSAGGSAGGSAGSGDGN) shows a compositional bias: gly residues. A run of 6 repeats spans residues 53–56 (GGSA), 57–60 (GGSA), 61–64 (GGSA), 65–68 (GGSA), 69–72 (GGSA), and 73–76 (GGSA). The interval 53–76 (GGSAGGSAGGSAGGSAGGSAGGSA) is 6 X 4 AA tandem repeats of G-G-S-A. Low complexity predominate over residues 83–119 (GADAEGSSSTPATTTTTKTTTTTTTTNDAEASTSTSS). Residues 122–137 (PNHKNAETNPKGKGEV) show a composition bias toward basic and acidic residues. Composition is skewed to polar residues over residues 139 to 165 (EPNQANKETQNNSNVQQDSQTKSNVPP) and 172 to 200 (KSPTAQPEQAENSAPTAEQTESPELQSAP). The N-linked (GlcNAc...) asparagine glycan is linked to N149. A glycan (N-linked (GlcNAc...) asparagine) is linked at N221. An intrachain disulfide couples C229 to C237. Residues N245 and N246 are each glycosylated (N-linked (GlcNAc...) asparagine). N246 carries GPI-anchor amidated asparagine lipidation. Positions 247–272 (SSNIASINKFVVLISATLVLSFAIFI) are cleaved as a propeptide — removed in mature form.

The protein resides in the cell membrane. Its function is as follows. May play a role in the merozoite attachment to the erythrocyte. In Plasmodium falciparum (isolate 3D7), this protein is Merozoite surface protein 2.